Here is a 647-residue protein sequence, read N- to C-terminus: Threonine--tRNA ligase (647 aa).

One can recognise a TGS domain in the interval 1–61 (MINITFPDGA…TEDGSIEIVT (61 aa)). The tract at residues 242–540 (DHRKLGKELD…LIENYKGAFP (299 aa)) is catalytic. The Zn(2+) site is built by cysteine 336, histidine 387, and histidine 517.

Belongs to the class-II aminoacyl-tRNA synthetase family. As to quaternary structure, homodimer. Zn(2+) serves as cofactor.

Its subcellular location is the cytoplasm. It catalyses the reaction tRNA(Thr) + L-threonine + ATP = L-threonyl-tRNA(Thr) + AMP + diphosphate + H(+). In terms of biological role, catalyzes the attachment of threonine to tRNA(Thr) in a two-step reaction: L-threonine is first activated by ATP to form Thr-AMP and then transferred to the acceptor end of tRNA(Thr). Also edits incorrectly charged L-seryl-tRNA(Thr). The protein is Threonine--tRNA ligase of Streptococcus pneumoniae serotype 19F (strain G54).